An 80-amino-acid polypeptide reads, in one-letter code: Small ribosomal subunit protein bS18 (80 aa).

The protein belongs to the bacterial ribosomal protein bS18 family. As to quaternary structure, part of the 30S ribosomal subunit. Forms a tight heterodimer with protein bS6.

Its function is as follows. Binds as a heterodimer with protein bS6 to the central domain of the 16S rRNA, where it helps stabilize the platform of the 30S subunit. The protein is Small ribosomal subunit protein bS18 of Staphylococcus saprophyticus subsp. saprophyticus (strain ATCC 15305 / DSM 20229 / NCIMB 8711 / NCTC 7292 / S-41).